A 145-amino-acid chain; its full sequence is Holo-[acyl-carrier-protein] synthase (145 aa).

Mg(2+) is bound by residues Asp-9 and Glu-63.

Belongs to the P-Pant transferase superfamily. AcpS family. It depends on Mg(2+) as a cofactor.

It is found in the cytoplasm. The catalysed reaction is apo-[ACP] + CoA = holo-[ACP] + adenosine 3',5'-bisphosphate + H(+). Transfers the 4'-phosphopantetheine moiety from coenzyme A to a Ser of acyl-carrier-protein. This Burkholderia vietnamiensis (strain G4 / LMG 22486) (Burkholderia cepacia (strain R1808)) protein is Holo-[acyl-carrier-protein] synthase.